Here is a 485-residue protein sequence, read N- to C-terminus: Zinc finger protein 639 (485 aa).

Residues 1–14 (MSEYPKKRKRKTLH) are compositionally biased toward basic residues. Disordered stretches follow at residues 1–23 (MSEY…DSSG) and 54–82 (DNKD…SRSQ). At Ser60 the chain carries Phosphoserine. Residue Lys76 forms a Glycyl lysine isopeptide (Lys-Gly) (interchain with G-Cter in SUMO2) linkage. The residue at position 88 (Ser88) is a Phosphoserine. Residues Lys177, Lys181, and Lys226 each participate in a glycyl lysine isopeptide (Lys-Gly) (interchain with G-Cter in SUMO2) cross-link. C2H2-type zinc fingers lie at residues 204-227 (YKCE…ILKH), 233-255 (NVCR…AKLH), 260-283 (YICK…ADTH), 289-311 (YWCE…FQEH), 374-397 (FVCQ…AIEH), 403-425 (HVCD…LNSH), 431-454 (YLCQ…DFKH), and 460-482 (HKCS…LPVH). The interaction with CTNNA2 stretch occupies residues 371–455 (KNFFVCQVCG…LKIHLDFKHS (85 aa)).

It belongs to the krueppel C2H2-type zinc-finger protein family. Interacts with CTNNA2.

It localises to the nucleus. In terms of biological role, binds DNA and may function as a transcriptional repressor. The sequence is that of Zinc finger protein 639 (Znf639) from Rattus norvegicus (Rat).